The primary structure comprises 789 residues: Mediator of RNA polymerase II transcription subunit 15 (789 aa).

The segment at 9–73 is interaction with SREBF1; sequence DWRSAAFRQK…IHFRDIHNKK (65 aa). Disordered stretches follow at residues 88–140 and 257–326; these read LTGG…APHG and QQQA…PLVS. The span at 89 to 102 shows a compositional bias: low complexity; it reads TGGPTPGAAGIGMP. Gly residues predominate over residues 108 to 118; that stretch reads QSLGGMGGLGA. Low complexity-rich tracts occupy residues 257-274, 282-291, and 302-326; these read QQQA…SMQQ, ALPQQLSQLH, and AQQS…PLVS. R347 bears the Asymmetric dimethylarginine mark. The segment at 404–531 is disordered; it reads RFPPTSTMSA…PAGSSQAEEQ (128 aa). A compositionally biased stretch (polar residues) spans 407 to 426; the sequence is PTSTMSAGPSSSISLGGQPT. The span at 427-450 shows a compositional bias: low complexity; that stretch reads TQVSQSSLTMLSSPSPGQQVQTPQ. The segment covering 451-463 has biased composition (pro residues); that stretch reads SMPPPPQPSPQPG. Low complexity predominate over residues 464–483; that stretch reads SQPNSNVSSGPAPSPSSFLP. Polar residues-rich tracts occupy residues 494 to 504 and 512 to 530; these read VTARTPQNFSV and TPVN…QAEE. Positions 548–565 match the Nuclear localization signal motif; sequence RRMINKIDKNEDRKKDLS. Residue T604 is modified to Phosphothreonine.

The protein belongs to the Mediator complex subunit 15 family. In terms of assembly, component of the Mediator complex, which is composed of MED1, MED4, MED6, MED7, MED8, MED9, MED10, MED11, MED12, MED13, MED13L, MED14, MED15, MED16, MED17, MED18, MED19, MED20, MED21, MED22, MED23, MED24, MED25, MED26, MED27, MED29, MED30, MED31, CCNC, CDK8 and CDC2L6/CDK11. The MED12, MED13, CCNC and CDK8 subunits form a distinct module termed the CDK8 module. Mediator containing the CDK8 module is less active than Mediator lacking this module in supporting transcriptional activation. Individual preparations of the Mediator complex lacking one or more distinct subunits have been variously termed ARC, CRSP, DRIP, PC2, SMCC and TRAP. Interacts with SMAD2, SMAD3, SREBF1 and SREBF2. Interacts with WWTR1. Interacts with TRIM11. Post-translationally, ubiquitinated by TRIM11, leading to proteasomal degradation.

Its subcellular location is the cytoplasm. It is found in the nucleus. Its function is as follows. Component of the Mediator complex, a coactivator involved in the regulated transcription of nearly all RNA polymerase II-dependent genes. Mediator functions as a bridge to convey information from gene-specific regulatory proteins to the basal RNA polymerase II transcription machinery. Mediator is recruited to promoters by direct interactions with regulatory proteins and serves as a scaffold for the assembly of a functional preinitiation complex with RNA polymerase II and the general transcription factors. Required for cholesterol-dependent gene regulation. Positively regulates the Nodal signaling pathway. This Mus musculus (Mouse) protein is Mediator of RNA polymerase II transcription subunit 15 (Med15).